The following is a 143-amino-acid chain: Nucleoside diphosphate kinase (143 aa).

6 residues coordinate ATP: Lys11, Phe59, Arg87, Thr93, Arg104, and Asn114. The Pros-phosphohistidine intermediate role is filled by His117.

It belongs to the NDK family. As to quaternary structure, homotetramer. Mg(2+) is required as a cofactor.

Its subcellular location is the cytoplasm. It carries out the reaction a 2'-deoxyribonucleoside 5'-diphosphate + ATP = a 2'-deoxyribonucleoside 5'-triphosphate + ADP. The catalysed reaction is a ribonucleoside 5'-diphosphate + ATP = a ribonucleoside 5'-triphosphate + ADP. Major role in the synthesis of nucleoside triphosphates other than ATP. The ATP gamma phosphate is transferred to the NDP beta phosphate via a ping-pong mechanism, using a phosphorylated active-site intermediate. The protein is Nucleoside diphosphate kinase of Shewanella woodyi (strain ATCC 51908 / MS32).